The chain runs to 344 residues: Phenylalanine--tRNA ligase alpha subunit (344 aa).

E256 is a binding site for Mg(2+).

The protein belongs to the class-II aminoacyl-tRNA synthetase family. Phe-tRNA synthetase alpha subunit type 1 subfamily. As to quaternary structure, tetramer of two alpha and two beta subunits. Requires Mg(2+) as cofactor.

It is found in the cytoplasm. It carries out the reaction tRNA(Phe) + L-phenylalanine + ATP = L-phenylalanyl-tRNA(Phe) + AMP + diphosphate + H(+). This chain is Phenylalanine--tRNA ligase alpha subunit (pheS), found in Halalkalibacterium halodurans (strain ATCC BAA-125 / DSM 18197 / FERM 7344 / JCM 9153 / C-125) (Bacillus halodurans).